A 619-amino-acid polypeptide reads, in one-letter code: Bifunctional glutathionylspermidine synthetase/amidase (619 aa).

The segment at 2-195 is gsp amidase; it reads SKGTTSQDAP…LGWMIQTEDT (194 aa). The Peptidase C51 domain maps to 34–176; sequence DPQEYEDDAV…MVVENGCYTL (143 aa). Residue glutamine 58 participates in glutathionylspermidine binding. Catalysis depends on cysteine 59, which acts as the S-(gamma-glutamyl-cysteinyl-glycyl)-cysteine intermediate. Cysteine sulfenic acid (-SOH); transient is present on cysteine 59. Residues arginine 64, 78-81, and asparagine 149 each bind glutathionylspermidine; that span reads VGMA. Residues 196-205 are linker; it reads EYSLPQPEIA. Residues 206-619 form a gsp synthetase region; that stretch reads GELLKISGAR…DIEPLIVVKK (414 aa). Arginine 316 contributes to the glutathione binding site. ATP is bound at residue 316–318; it reads RMD. Mg(2+) is bound by residues aspartate 318, glutamate 330, and asparagine 332. Position 335 (serine 335) interacts with glutathione. Residue glutamate 391 participates in spermidine binding. The glutathione site is built by glutamate 392 and threonine 446. ATP is bound by residues lysine 498, lysine 533, 539–540, 568–571, glutamine 582, and 603–605; these read CG, QQLW, and LVI. Aspartate 610 contacts spermidine.

In the C-terminal section; belongs to the glutathionylspermidine synthase preATP-grasp family. Homodimer. Oxidation of Cys-59 to sulfenic acid during oxidative stress selectively inhibits the amidase activity which leads to a rapid increase in the amounts of intracellular Gsp and Gsp S-thiolated proteins (GspSSPs).

The catalysed reaction is spermidine + glutathione + ATP = glutathionylspermidine + ADP + phosphate + H(+). It catalyses the reaction glutathionylspermidine + H2O = spermidine + glutathione. It functions in the pathway sulfur metabolism; glutathione metabolism. It participates in amine and polyamine metabolism; spermidine metabolism. With respect to regulation, when exposed to oxidative stress, Gsp amidase activity is transiently inhibited in vivo by oxidation of the catalytic Cys-59 thiol to sulfenic acid; this modification does not affect Gsp synthetase activity. Gsp amidase activity is negatively autoregulated by the Gsp synthetase domain, and is activated by the Gsp synthetase substrates, GSH and ATP-Mg(2+); the occupancy of the synthetase active site may initiate communication through the protein as manifest by the release of inhibition of the amidase activity. A tetrahedral phosphonate analog of glutathionylspermidine, designed as a mimic of the proposed tetrahedral intermediate for either reaction, inhibits the synthetase activity (Ki of 10 uM) but does not inhibit the amidase activity. Amidase activity is inhibited by iodoacetamide in vitro. Catalyzes the formation of an amide bond between glutathione (GSH) and spermidine coupled with hydrolysis of ATP; also catalyzes the opposing reaction, i.e. the hydrolysis of glutathionylspermidine (Gsp) back to glutathione and spermidine. The amidase active site can also hydrolyze Gsp-disulfide (Gsp-S-S-Gsp) to Gsp-SG and Gsp S-thiolated proteins (GspSSPs) to GSH S-thiolated protein (GSSPs). Likely acts synergistically with glutaredoxin to regulate the redox environment of E.coli and defend against oxidative damage. In vitro, the amidase active site also catalyzes hydrolysis of amide and ester derivatives of glutathione (e.g. glutathione ethyl ester and glutathione amide) but lacks activity toward acetylspermidine (N1 and N8) and acetylspermine (N1). In Escherichia coli (strain K12), this protein is Bifunctional glutathionylspermidine synthetase/amidase (gss).